We begin with the raw amino-acid sequence, 733 residues long: Microtubule-associated protein tau (733 aa).

The segment covering 1-16 (MADPRQEFDTMEDHAG) has biased composition (basic and acidic residues). The segment at 1–548 (MADPRQEFDT…PVPMPDLKNV (548 aa)) is disordered. Ala2 carries the post-translational modification N-acetylalanine. Tyr18 is subject to Phosphotyrosine; by FYN. A Glycyl lysine isopeptide (Lys-Gly) (interchain with G-Cter in ubiquitin) cross-link involves residue Lys33. A phosphoserine mark is found at Ser35 and Ser50. Over residues 50-60 (SETSDAKSTPT) the composition is skewed to polar residues. Thr58, Thr60, and Thr100 each carry phosphothreonine. Position 115 is an omega-N-methylarginine (Arg115). Positions 126–137 (SDWTRQQVSSMS) are enriched in polar residues. The span at 157–172 (RPEDIEKSHPASELLR) shows a compositional bias: basic and acidic residues. Phosphoserine is present on Ser188. Over residues 189-202 (EEEVDEDLTVDESS) the composition is skewed to acidic residues. Polar residues predominate over residues 203 to 212 (QDSPPSQASL). Composition is skewed to basic and acidic residues over residues 270-294 (EEGH…KEQD) and 354-366 (ASKD…EKKA). Positions 413 to 427 (KHVSSVTPRNGSPGT) are enriched in polar residues. A Phosphothreonine modification is found at Thr445. Arg447 bears the Omega-N-methylarginine mark. Ser451 carries the phosphoserine modification. Lys455 carries the post-translational modification N6,N6-dimethyllysine; alternate. At Lys455 the chain carries N6-acetyllysine; alternate. Thr461, Thr467, and Thr468 each carry phosphothreonine. Ser470 bears the Phosphoserine mark. At Thr473 the chain carries Phosphothreonine. Phosphoserine is present on residues Ser477, Ser483, and Ser487. Residues 479 to 506 (EPPKSGERSGYSSPGSPGTPGSRSRTPS) are compositionally biased toward low complexity. At Tyr489 the chain carries Phosphotyrosine. Residues Ser490, Ser491, and Ser494 each carry the phosphoserine modification. 2 positions are modified to phosphothreonine: Thr497 and Thr504. Ser506 carries the phosphoserine modification. Thr509 carries the phosphothreonine modification. N6-acetyllysine is present on Lys517. The residue at position 523 (Thr523) is a Phosphothreonine. A phosphoserine mark is found at Ser527, Ser529, and Ser531. Tau/MAP repeat units lie at residues 536 to 566 (QTAP…GGGK), 567 to 597 (VQII…GGGS), 598 to 628 (VQIV…GGGQ), and 629 to 660 (VEVK…GGGN). A Glycyl lysine isopeptide (Lys-Gly) (interchain with G-Cter in ubiquitin) cross-link involves residue Lys546. Lys551 is subject to N6-acetyllysine; alternate. Lys551 carries the post-translational modification N6-methyllysine; alternate. Residue Lys551 forms a Glycyl lysine isopeptide (Lys-Gly) (interchain with G-Cter in ubiquitin); alternate linkage. Residue Ser554 is modified to Phosphoserine; by MARK1, BRSK1, BRSK2 and PHK. Lys559 participates in a covalent cross-link: Glycyl lysine isopeptide (Lys-Gly) (interchain with G-Cter in ubiquitin). At Lys573 the chain carries N6-acetyllysine; alternate. Lys573 is covalently cross-linked (Glycyl lysine isopeptide (Lys-Gly) (interchain with G-Cter in ubiquitin); alternate). Phosphoserine is present on residues Ser577 and Ser581. N6-acetyllysine is present on Lys582. A disulfide bond links Cys583 and Cys614. Ser585 is subject to Phosphoserine. Position 590 is an N6-acetyllysine; alternate (Lys590). A Glycyl lysine isopeptide (Lys-Gly) (interchain with G-Cter in ubiquitin); alternate cross-link involves residue Lys590. A Phosphoserine modification is found at Ser597. Lys603 bears the N6,N6-dimethyllysine; alternate mark. N6-acetyllysine; alternate is present on residues Lys603, Lys609, and Lys613. Residues Lys603, Lys609, and Lys613 each participate in a glycyl lysine isopeptide (Lys-Gly) (interchain with G-Cter in ubiquitin); alternate cross-link. Ser616 carries the phosphoserine modification. Residues Lys623, Lys635, and Lys639 each carry the N6-acetyllysine; alternate modification. Residues Lys623, Lys635, and Lys639 each participate in a glycyl lysine isopeptide (Lys-Gly) (interchain with G-Cter in ubiquitin); alternate cross-link. The residue at position 641 (Arg641) is an Omega-N-methylarginine. Phosphoserine is present on Ser644. Residue Lys645 forms a Glycyl lysine isopeptide (Lys-Gly) (interchain with G-Cter in ubiquitin) linkage. Ser648 carries the phosphoserine modification. Lys661 bears the N6-acetyllysine; alternate mark. Lys661 participates in a covalent cross-link: Glycyl lysine isopeptide (Lys-Gly) (interchain with G-Cter in ubiquitin); alternate. Lys667 participates in a covalent cross-link: Glycyl lysine isopeptide (Lys-Gly) (interchain with G-Cter in ubiquitin). Residue Lys677 is modified to N6-acetyllysine; alternate. Residue Lys677 forms a Glycyl lysine isopeptide (Lys-Gly) (interchain with G-Cter in ubiquitin); alternate linkage. The residue at position 686 (Tyr686) is a Phosphotyrosine. Residue Ser688 is modified to Phosphoserine. The tract at residues 690-709 (VVSGDTSPRHLSNVSSTGSI) is disordered. Ser692 carries the phosphoserine; alternate modification. Ser692 carries O-linked (GlcNAc...) serine; alternate glycosylation. Positions 693-708 (GDTSPRHLSNVSSTGS) are enriched in polar residues. Phosphothreonine is present on Thr695. Phosphoserine occurs at positions 696, 701, 708, and 714. Thr719 carries the post-translational modification Phosphothreonine.

Interacts with MARK1, MARK2, MARK3 and MARK4. Interacts with SQSTM1 when polyubiquitinated. Interacts with PSMC2 through SQSTM1. Interacts with FKBP4. Binds to CSNK1D. Interacts with SGK1. Interacts with EPM2A; the interaction dephosphorylates MAPT at Ser-369. Interacts with PIN1. Interacts with LRRK2. Interacts with LRP1, leading to endocytosis; this interaction is reduced in the presence of LRPAP1/RAP. Polyubiquitinated. Requires functional TRAF6 and may provoke SQSTM1-dependent degradation by the proteasome. Post-translationally, phosphorylation at various serine and threonine residues in S-P or T-P motifs by proline-directed protein kinases (PDPK1, CDK1, CDK5, GSK3, MAPK) (a few sites per protein in interphase, more in mitosis), and at serine residues in K-X-G-S motifs by MAP/microtubule affinity-regulating kinase (MARK1, MARK2, MARK3, MARK4), causing detachment from microtubules, and their disassembly. Phosphorylated by PHK. Dephosphorylation at several serine and threonine residues by the serine/threonine phosphatase PPP5C. Phosphorylation at Ser-554 by BRSK1 and BRSK2 in neurons affects ability to bind microtubules and plays a role in neuron polarization. Phosphorylation at Ser-188 by SGK1 mediates microtubule depolymerization and neurite formation in hippocampal neurons. As to expression, expressed in neurons and at a lower level in the liver and kidney. Isoform PNS-tau is expressed in the peripheral nervous system while the others are expressed in the central nervous system.

It is found in the cytoplasm. The protein localises to the cytosol. Its subcellular location is the cell membrane. It localises to the cytoskeleton. The protein resides in the cell projection. It is found in the axon. The protein localises to the dendrite. Its subcellular location is the secreted. Promotes microtubule assembly and stability, and might be involved in the establishment and maintenance of neuronal polarity. The C-terminus binds axonal microtubules while the N-terminus binds neural plasma membrane components, suggesting that tau functions as a linker protein between both. Axonal polarity is predetermined by tau localization (in the neuronal cell) in the domain of the cell body defined by the centrosome. The short isoforms allow plasticity of the cytoskeleton whereas the longer isoforms may preferentially play a role in its stabilization. The polypeptide is Microtubule-associated protein tau (Mus musculus (Mouse)).